The following is a 227-amino-acid chain: MIHHIPNVLNKEQVAEFRKLMEEANWVGGKVTAGTLSASVKRNQQLSEQDPLTHHLSDIVIKAIWQNPLFQAAALPHKIIPPLFNRYDEHESFGFHVDNSIRLIRGTAEQIRTDLSCTLFLSEPDEYEGGDLVIEDTYGYHEVKLPAGDVVLYPSTSLHEVSSITAGTRFASFFWVQSLVRDDSKRHLLFSLDESIRELRKSHGDSYSEVMKLTNIYHNLIRMWSEL.

Residues 78–178 form the Fe2OG dioxygenase domain; sequence KIIPPLFNRY…RFASFFWVQS (101 aa). Positions 96, 98, and 159 each coordinate Fe cation. Residue R169 participates in 2-oxoglutarate binding.

The cofactor is Fe(2+). It depends on L-ascorbate as a cofactor.

This chain is PKHD-type hydroxylase A1S_0473, found in Acinetobacter baumannii (strain ATCC 17978 / DSM 105126 / CIP 53.77 / LMG 1025 / NCDC KC755 / 5377).